We begin with the raw amino-acid sequence, 422 residues long: Histidine--tRNA ligase (422 aa).

This sequence belongs to the class-II aminoacyl-tRNA synthetase family. Homodimer.

It localises to the cytoplasm. It catalyses the reaction tRNA(His) + L-histidine + ATP = L-histidyl-tRNA(His) + AMP + diphosphate + H(+). The protein is Histidine--tRNA ligase of Vibrio parahaemolyticus serotype O3:K6 (strain RIMD 2210633).